The primary structure comprises 845 residues: MSAALPSIQLPVDYNNLFNEITDFLVTFKQDTLSSDATRNENEDENLDAENIEQHLLEKGPKYMAMLQKVANRELNSVIIDLDDILQYQNEKFLQGTQADDLVSAIQQNANHFTELFCRAIDNNMPLPTKEIDYKDDVLDVILNQRRLRNERMLSDRTNEIRSENLMDTTMDPPSSMNDALREVVEDETELFPPNLTRRYFLYFKPLSQNCARRYRKKAISSKPLSVRQIKGDFLGQLITVRGIITRVSDVKPAVEVIAYTCDQCGYEVFQEVNSRTFTPLSECTSEECSQNQTKGQLFMSTRASKFSAFQECKIQELSQQVPVGHIPRSLNIHVNGTLVRSLSPGDIVDVTGIFLPAPYTGFKALKAGLLTETYLEAQFVRQHKKKFASFSLTSDVEERVMELITSGDVYNRLAKSIAPEIYGNLDVKKALLLLLVGGVDKRVGDGMKIRGDINVCLMGDPGVAKSQLLKAICKISPRGVYTTGKGSSGVGLTAAVMKDPVTDEMILEGGALVLADNGICCIDEFDKMDESDRTAIHEVMEQQTISISKAGINTTLNARTSILAAANPLYGRYNPRLSPLDNINLPAALLSRFDILFLMLDIPSRDDDEKLAEHVTYVHMHNKQPDLDFTPVEPSKMREYIAYAKTKRPVMSEAVNDYVVQAYIRLRQDSKREMDSKFSFGQATPRTLLGIIRLSQALAKLRLADMVDIDDVEEALRLVRVSKESLYQETNKSKEDESPTTKIFTIIKKMLQETGKNTLSYENIVKTVRLRGFTMLQLSNCIQEYSYLNVWHLINEGNTLKFVDDGTMDTDQEDSLVSTPKLAPQTTASANVSAQDSDIDLQDA.

One can recognise an MCM domain in the interval 410 to 617; it reads VYNRLAKSIA…DDEKLAEHVT (208 aa). Tyr-423, Gly-463, Ala-465, Lys-466, Ser-467, Asn-568, Arg-593, and Arg-687 together coordinate ATP. An Arginine finger motif is present at residues 592-595; the sequence is SRFD. At Thr-811 the chain carries Phosphothreonine. A disordered region spans residues 812 to 845; it reads DQEDSLVSTPKLAPQTTASANVSAQDSDIDLQDA. A Phosphoserine modification is found at Ser-819. The segment covering 825–837 has biased composition (polar residues); the sequence is PQTTASANVSAQD. Phosphoserine is present on Ser-838.

The protein belongs to the MCM family. Component of the MCM2-7 complex. The complex forms a toroidal hexameric ring with the proposed subunit order MCM2-MCM6-MCM4-MCM7-MCM3-MCM5; loaded onto DNA, forms a head-head double hexamer. Interacts with CSM1 and MCM10.

Its subcellular location is the cytoplasm. It is found in the nucleus. The catalysed reaction is ATP + H2O = ADP + phosphate + H(+). Its function is as follows. Acts as a component of the MCM2-7 complex (MCM complex) which is the putative replicative helicase essential for 'once per cell cycle' DNA replication initiation and elongation in eukaryotic cells. Core component of CDC45-MCM-GINS (CMG) helicase, the molecular machine that unwinds template DNA during replication, and around which the replisome is built. The active ATPase sites in the MCM2-7 ring are formed through the interaction surfaces of two neighboring subunits such that a critical structure of a conserved arginine finger motif is provided in trans relative to the ATP-binding site of the Walker A box of the adjacent subunit. The six ATPase active sites, however, are likely to contribute differentially to the complex helicase activity. Once loaded onto DNA, double hexamers can slide on dsDNA in the absence of ATPase activity. This chain is DNA replication licensing factor MCM7 (MCM7), found in Saccharomyces cerevisiae (strain ATCC 204508 / S288c) (Baker's yeast).